The following is a 359-amino-acid chain: Putative cyclin-F1-2 (359 aa).

This sequence belongs to the cyclin family. Cyclin F subfamily.

This chain is Putative cyclin-F1-2 (CYCF1-2), found in Oryza sativa subsp. japonica (Rice).